The primary structure comprises 346 residues: Phosphoribosylformylglycinamidine cyclo-ligase (346 aa).

Belongs to the AIR synthase family.

It is found in the cytoplasm. The enzyme catalyses 2-formamido-N(1)-(5-O-phospho-beta-D-ribosyl)acetamidine + ATP = 5-amino-1-(5-phospho-beta-D-ribosyl)imidazole + ADP + phosphate + H(+). It participates in purine metabolism; IMP biosynthesis via de novo pathway; 5-amino-1-(5-phospho-D-ribosyl)imidazole from N(2)-formyl-N(1)-(5-phospho-D-ribosyl)glycinamide: step 2/2. In Prochlorococcus marinus (strain NATL2A), this protein is Phosphoribosylformylglycinamidine cyclo-ligase.